A 389-amino-acid chain; its full sequence is MKDNLERAKLMVSSTVFSWLLLCLFAVTTSVSVQPTCTFPAIYNFGDSNSDTGGISAAFEPIRDPYGQGFFHRPTGRDSDGRLTIDFIAERLGLPYLSAYLNSLGSNFRHGANFATGGSTIRRQNETIFQYGISPFSLDMQIAQFDQFKARSALLFTQIKSRYDREKLPRQEEFAKALYTFDIGQNDLSVGFRTMSVDQLKATIPDIVNHLASAVRNIYQQGGRTFWVHNTGPFGCLPVNMFYMGTPAPGYLDKSGCVKAQNEMAMEFNRKLKETVINLRKELTQAAITYVDVYTAKYEMMSNPKKLGFANPLKVCCGYHEKYDHIWCGNKGKVNNTEIYGGSCPNPVMAVSWDGVHYTEAANKHVADRTLNGLLTDPPVPITRACYRQ.

The N-terminal stretch at 1–30 (MKDNLERAKLMVSSTVFSWLLLCLFAVTTS) is a signal peptide. The active-site Nucleophile is serine 48. Asparagine 125 and asparagine 335 each carry an N-linked (GlcNAc...) asparagine glycan. Residues aspartate 354 and histidine 357 contribute to the active site.

It belongs to the 'GDSL' lipolytic enzyme family.

Its subcellular location is the secreted. This Arabidopsis thaliana (Mouse-ear cress) protein is GDSL esterase/lipase At5g14450.